We begin with the raw amino-acid sequence, 274 residues long: Type II restriction enzyme HgiBI (274 aa).

The protein belongs to the TdeIII type II restriction endonuclease family.

The catalysed reaction is Endonucleolytic cleavage of DNA to give specific double-stranded fragments with terminal 5'-phosphates.. Its function is as follows. A P subtype restriction enzyme that recognizes the double-stranded sequence 5'-GGWCC-3' and cleaves after G-1. This system is less active than isoschizomeric RM.HgiEI. This Herpetosiphon aurantiacus (Herpetosiphon giganteus) protein is Type II restriction enzyme HgiBI.